The chain runs to 200 residues: Imidazole glycerol phosphate synthase subunit HisH (200 aa).

In terms of domain architecture, Glutamine amidotransferase type-1 spans 3–200 (DLALIDAGGA…LRNFLEMSFP (198 aa)). Residue C78 is the Nucleophile of the active site. Residues H179 and E181 contribute to the active site.

In terms of assembly, heterodimer of HisH and HisF.

Its subcellular location is the cytoplasm. The enzyme catalyses 5-[(5-phospho-1-deoxy-D-ribulos-1-ylimino)methylamino]-1-(5-phospho-beta-D-ribosyl)imidazole-4-carboxamide + L-glutamine = D-erythro-1-(imidazol-4-yl)glycerol 3-phosphate + 5-amino-1-(5-phospho-beta-D-ribosyl)imidazole-4-carboxamide + L-glutamate + H(+). It carries out the reaction L-glutamine + H2O = L-glutamate + NH4(+). It functions in the pathway amino-acid biosynthesis; L-histidine biosynthesis; L-histidine from 5-phospho-alpha-D-ribose 1-diphosphate: step 5/9. Functionally, IGPS catalyzes the conversion of PRFAR and glutamine to IGP, AICAR and glutamate. The HisH subunit catalyzes the hydrolysis of glutamine to glutamate and ammonia as part of the synthesis of IGP and AICAR. The resulting ammonia molecule is channeled to the active site of HisF. The chain is Imidazole glycerol phosphate synthase subunit HisH from Xanthomonas campestris pv. campestris (strain 8004).